The sequence spans 501 residues: GTPase Obg (501 aa).

The 158-residue stretch at 2–159 (NRFIDRVVLH…HDLILELKSM (158 aa)) folds into the Obg domain. Positions 160–341 (ADVGLVGFPS…LKYKLLEIVQ (182 aa)) constitute an OBG-type G domain. GTP contacts are provided by residues 166–173 (GFPSAGKS), 191–195 (FTTLQ), 212–215 (DVPG), 292–295 (NKAD), and 322–324 (SAV). The Mg(2+) site is built by S173 and T193. The OCT domain maps to 362–442 (VDHRTKGQFQ…IGGISFEWEP (81 aa)).

Belongs to the TRAFAC class OBG-HflX-like GTPase superfamily. OBG GTPase family. In terms of assembly, monomer. Requires Mg(2+) as cofactor.

It localises to the cytoplasm. Functionally, an essential GTPase which binds GTP, GDP and possibly (p)ppGpp with moderate affinity, with high nucleotide exchange rates and a fairly low GTP hydrolysis rate. Plays a role in control of the cell cycle, stress response, ribosome biogenesis and in those bacteria that undergo differentiation, in morphogenesis control. In Corynebacterium glutamicum (strain R), this protein is GTPase Obg.